The sequence spans 242 residues: Demethylmenaquinone methyltransferase (242 aa).

S-adenosyl-L-methionine is bound by residues threonine 74 and aspartate 93.

This sequence belongs to the class I-like SAM-binding methyltransferase superfamily. MenG/UbiE family.

The catalysed reaction is a 2-demethylmenaquinol + S-adenosyl-L-methionine = a menaquinol + S-adenosyl-L-homocysteine + H(+). The protein operates within quinol/quinone metabolism; menaquinone biosynthesis; menaquinol from 1,4-dihydroxy-2-naphthoate: step 2/2. In terms of biological role, methyltransferase required for the conversion of demethylmenaquinol (DMKH2) to menaquinol (MKH2). The chain is Demethylmenaquinone methyltransferase from Chlorobaculum tepidum (strain ATCC 49652 / DSM 12025 / NBRC 103806 / TLS) (Chlorobium tepidum).